Here is a 392-residue protein sequence, read N- to C-terminus: Na(+)/H(+) antiporter NhaA (392 aa).

11 helical membrane-spanning segments follow: residues 14 to 34 (AGGLILIFAAVVALFMANSPL), 59 to 79 (LLLWINDGLMAIFFLVVGLEV), 95 to 115 (IFPAIAALGGMLAPALIYLLF), 125 to 145 (GWAIPAATDIAFALGVMALLG), 154 to 174 (VFLLALAIIDDLGVIIIIALF), 179 to 199 (VSLQALGMAAAAIALLGYMNW), 213 to 233 (LVLWVCILKSGVHATLAGVIV), 254 to 274 (GLHPWVAYLILPLFAFANAGV), 287 to 307 (LLPLGIASGLFIGKPLGIFLF), 328 to 348 (IFAVSVLCGIGFTMSIFIASL), and 363 to 383 (LGILLGSTTAAVVGYSLLRLA).

It belongs to the NhaA Na(+)/H(+) (TC 2.A.33) antiporter family.

The protein resides in the cell inner membrane. The enzyme catalyses Na(+)(in) + 2 H(+)(out) = Na(+)(out) + 2 H(+)(in). Functionally, na(+)/H(+) antiporter that extrudes sodium in exchange for external protons. This chain is Na(+)/H(+) antiporter NhaA, found in Yersinia enterocolitica serotype O:8 / biotype 1B (strain NCTC 13174 / 8081).